A 591-amino-acid chain; its full sequence is V-type ATP synthase alpha chain (591 aa).

231–238 (GPFGSGKT) serves as a coordination point for ATP.

The protein belongs to the ATPase alpha/beta chains family.

The enzyme catalyses ATP + H2O + 4 H(+)(in) = ADP + phosphate + 5 H(+)(out). In terms of biological role, produces ATP from ADP in the presence of a proton gradient across the membrane. The V-type alpha chain is a catalytic subunit. The protein is V-type ATP synthase alpha chain of Clostridium novyi (strain NT).